We begin with the raw amino-acid sequence, 305 residues long: NADH-cytochrome b5 reductase 1 (305 aa).

Residues 8–28 (VLLASLGVGLFTLFGLALGTY) form a helical membrane-spanning segment. Residues 44–156 (DEKYLLRLLD…RGPSGLLSYA (113 aa)) form the FAD-binding FR-type domain. Residues 136–166 (DSLK…IQPN) and 175–210 (VAKK…QCFL) contribute to the FAD site.

It belongs to the flavoprotein pyridine nucleotide cytochrome reductase family. The cofactor is FAD.

It is found in the membrane. The enzyme catalyses 2 Fe(III)-[cytochrome b5] + NADH = 2 Fe(II)-[cytochrome b5] + NAD(+) + H(+). NADH-cytochrome b5 reductases are involved in desaturation and elongation of fatty acids, cholesterol biosynthesis, drug metabolism, and, in erythrocyte, methemoglobin reduction. The sequence is that of NADH-cytochrome b5 reductase 1 (Cyb5r1) from Rattus norvegicus (Rat).